The primary structure comprises 195 residues: Dephospho-CoA kinase (195 aa).

Residues 4–195 (IIGLTGGIAS…EQILDALQRL (192 aa)) enclose the DPCK domain. 12–17 (ASGKST) provides a ligand contact to ATP.

Belongs to the CoaE family.

The protein resides in the cytoplasm. The enzyme catalyses 3'-dephospho-CoA + ATP = ADP + CoA + H(+). It participates in cofactor biosynthesis; coenzyme A biosynthesis; CoA from (R)-pantothenate: step 5/5. Functionally, catalyzes the phosphorylation of the 3'-hydroxyl group of dephosphocoenzyme A to form coenzyme A. The protein is Dephospho-CoA kinase of Streptococcus agalactiae serotype III (strain NEM316).